Consider the following 754-residue polypeptide: Phosphoinositide 3-kinase regulatory subunit 6 (754 aa).

The tract at residues 343-363 is disordered; that stretch reads ERDLPTGADELPAPGSPEMER.

As to quaternary structure, heterodimer of a catalytic subunit (PIK3CG) and a regulatory (PIK3R6) subunit. The binding of PIK3R6 to PIK3CG may exclude the binding of PIK3R5 to PIK3CG. Interacts with beta-gamma G protein dimers. Interacts with PDE3B and RAPGEF3; form a signaling complex that regulates phosphatidylinositol 3-kinase gamma in angiogenesis.

It localises to the cytoplasm. The protein localises to the cell membrane. Functionally, regulatory subunit of the PI3K gamma complex. Acts as an adapter to drive activation of PIK3CG by beta-gamma G protein dimers. The PIK3CG:PIK3R6 heterodimer is much less sensitive to beta-gamma G protein dimers than PIK3CG:PIK3R5 and its membrane recruitment and beta-gamma G protein dimer-dependent activation requires HRAS bound to PIK3CG. Recruits of the PI3K gamma complex to a PDE3B:RAPGEF3 signaling complex involved in angiogenesis; signaling seems to involve RRAS. The sequence is that of Phosphoinositide 3-kinase regulatory subunit 6 (PIK3R6) from Homo sapiens (Human).